A 232-amino-acid chain; its full sequence is Phosphatidylserine decarboxylase proenzyme (232 aa).

The active-site Schiff-base intermediate with substrate; via pyruvic acid is the S190. S190 carries the post-translational modification Pyruvic acid (Ser); by autocatalysis.

The protein belongs to the phosphatidylserine decarboxylase family. PSD-A subfamily. Heterodimer of a large membrane-associated beta subunit and a small pyruvoyl-containing alpha subunit. Pyruvate is required as a cofactor. In terms of processing, is synthesized initially as an inactive proenzyme. Formation of the active enzyme involves a self-maturation process in which the active site pyruvoyl group is generated from an internal serine residue via an autocatalytic post-translational modification. Two non-identical subunits are generated from the proenzyme in this reaction, and the pyruvate is formed at the N-terminus of the alpha chain, which is derived from the carboxyl end of the proenzyme. The post-translation cleavage follows an unusual pathway, termed non-hydrolytic serinolysis, in which the side chain hydroxyl group of the serine supplies its oxygen atom to form the C-terminus of the beta chain, while the remainder of the serine residue undergoes an oxidative deamination to produce ammonia and the pyruvoyl prosthetic group on the alpha chain.

The protein resides in the cell membrane. The catalysed reaction is a 1,2-diacyl-sn-glycero-3-phospho-L-serine + H(+) = a 1,2-diacyl-sn-glycero-3-phosphoethanolamine + CO2. The protein operates within phospholipid metabolism; phosphatidylethanolamine biosynthesis; phosphatidylethanolamine from CDP-diacylglycerol: step 2/2. Functionally, catalyzes the formation of phosphatidylethanolamine (PtdEtn) from phosphatidylserine (PtdSer). The sequence is that of Phosphatidylserine decarboxylase proenzyme from Rhizobium leguminosarum bv. trifolii (strain WSM2304).